Here is a 257-residue protein sequence, read N- to C-terminus: 3-deoxy-manno-octulosonate cytidylyltransferase (257 aa).

Belongs to the KdsB family.

The protein resides in the cytoplasm. It carries out the reaction 3-deoxy-alpha-D-manno-oct-2-ulosonate + CTP = CMP-3-deoxy-beta-D-manno-octulosonate + diphosphate. The protein operates within nucleotide-sugar biosynthesis; CMP-3-deoxy-D-manno-octulosonate biosynthesis; CMP-3-deoxy-D-manno-octulosonate from 3-deoxy-D-manno-octulosonate and CTP: step 1/1. It participates in bacterial outer membrane biogenesis; lipopolysaccharide biosynthesis. Activates KDO (a required 8-carbon sugar) for incorporation into bacterial lipopolysaccharide in Gram-negative bacteria. The protein is 3-deoxy-manno-octulosonate cytidylyltransferase of Xylella fastidiosa (strain 9a5c).